Here is a 517-residue protein sequence, read N- to C-terminus: MELEELGIREECGVFGCIASGEWPTQLDVPHVITLGLVGLQHRGQESAGIVTSDGSSVPTFKSHKGMGLVNHVFTEDNLKKLYVSNLGIGHTRYATTGKCELENCQPFVVETLHGKIAVAHNGELVNAARLRKKLLRHGIGLSTSSDSEMITQLLAYTPPQEQDDTPDWVARIKNLMKEAPTAYSLLIMHRDVIYAVRDPYGNRPLCIGRLIPVSDINDKEKKTSETEGWVVSSESCSFLSIGARYYREVLPGEIVEISRHNVQTLDIISRSEGNPVAFCIFEYVYFARPDSMFEDQMVYTVRYRCGQQLAIEAPVDADLVSTVPESATPAALAYAGKCGLPYVEVLCKNRYVGRTFIQPNMRLRQLGVAKKFGVLSDNFKGKRIVLVDDSIVRGNTISPIIKLLKESGAKEVHIRVASPPIKYPCFMGINIPTKEELIANKPEFDHLAEYLGANSVVYLSVEGLVSSVQEGIKFKKQKEKKHDIMIQENGNGLECFEKSGHCTACLTGKYPVELEW.

At methionine 1 the chain carries N-acetylmethionine. Residues 1–11 constitute a propeptide that is removed on maturation; the sequence is MELEELGIREE. Cysteine 12 (nucleophile) is an active-site residue. In terms of domain architecture, Glutamine amidotransferase type-2 spans 12–261; sequence CGVFGCIASG…PGEIVEISRH (250 aa). Cysteine 280 is a [4Fe-4S] cluster binding site. Mg(2+) contacts are provided by serine 327, aspartate 389, and aspartate 390. [4Fe-4S] cluster is bound by residues cysteine 426, cysteine 503, and cysteine 506.

This sequence in the C-terminal section; belongs to the purine/pyrimidine phosphoribosyltransferase family. In terms of assembly, homotetramer. It depends on Mg(2+) as a cofactor. Requires [4Fe-4S] cluster as cofactor. As to expression, ubiquitously expressed.

The catalysed reaction is 5-phospho-beta-D-ribosylamine + L-glutamate + diphosphate = 5-phospho-alpha-D-ribose 1-diphosphate + L-glutamine + H2O. The protein operates within purine metabolism; IMP biosynthesis via de novo pathway; N(1)-(5-phospho-D-ribosyl)glycinamide from 5-phospho-alpha-D-ribose 1-diphosphate: step 1/2. Catalyzes the formation of phosphoribosylamine from phosphoribosylpyrophosphate (PRPP) and glutamine. The chain is Amidophosphoribosyltransferase (PPAT) from Homo sapiens (Human).